The chain runs to 109 residues: Probable gas vesicle protein J1 (109 aa).

Belongs to the gas vesicle GvpA family. As to quaternary structure, interacts with GvpA.

Its subcellular location is the gas vesicle. A minor component of the gas vesicle, might be involved in nucleating gas vesicle formation. Gas vesicles (GV) are hollow, gas filled proteinaceous nanostructures. It is not clear what function GVs perform in soil bacteria. This chain is Probable gas vesicle protein J1 (gvpJ1), found in Streptomyces coelicolor (strain ATCC BAA-471 / A3(2) / M145).